Here is a 157-residue protein sequence, read N- to C-terminus: 2-C-methyl-D-erythritol 2,4-cyclodiphosphate synthase (157 aa).

Positions 8 and 10 each coordinate a divalent metal cation. 4-CDP-2-C-methyl-D-erythritol 2-phosphate is bound by residues 8–10 and 34–35; these read DVH and HS. A divalent metal cation is bound at residue His-42. 4-CDP-2-C-methyl-D-erythritol 2-phosphate-binding positions include 56–58, 61–65, 100–106, 132–135, and Phe-139; these read DIG, FPDTD, AQKPKMA, and TTTE.

The protein belongs to the IspF family. In terms of assembly, homotrimer. A divalent metal cation is required as a cofactor.

The enzyme catalyses 4-CDP-2-C-methyl-D-erythritol 2-phosphate = 2-C-methyl-D-erythritol 2,4-cyclic diphosphate + CMP. It participates in isoprenoid biosynthesis; isopentenyl diphosphate biosynthesis via DXP pathway; isopentenyl diphosphate from 1-deoxy-D-xylulose 5-phosphate: step 4/6. Its function is as follows. Involved in the biosynthesis of isopentenyl diphosphate (IPP) and dimethylallyl diphosphate (DMAPP), two major building blocks of isoprenoid compounds. Catalyzes the conversion of 4-diphosphocytidyl-2-C-methyl-D-erythritol 2-phosphate (CDP-ME2P) to 2-C-methyl-D-erythritol 2,4-cyclodiphosphate (ME-CPP) with a corresponding release of cytidine 5-monophosphate (CMP). The protein is 2-C-methyl-D-erythritol 2,4-cyclodiphosphate synthase of Alkaliphilus oremlandii (strain OhILAs) (Clostridium oremlandii (strain OhILAs)).